The chain runs to 239 residues: Cysteine-rich venom protein kaouthin-1 (239 aa).

The signal sequence occupies residues 1 to 18 (MIAFSLLCLAAVLRQSFG). An SCP domain is found at 37-165 (VDLHNSLRRR…AWSYFYVCQY (129 aa)). 8 disulfide bridges follow: C74–C152, C91–C166, C147–C163, C185–C192, C188–C197, C201–C234, C210–C228, and C219–C232. The ShKT domain maps to 201 to 234 (CTIYNKLTNCDSLLKQGSCQDDWIKSNCPASCFC).

Belongs to the CRISP family. Expressed by the venom gland.

It is found in the secreted. Its function is as follows. Inhibits calcium-activated potassium channels (KCa), voltage-gated potassium channel (Kv), and the calcium release channel/ryanodine receptor (RyR). The protein is Cysteine-rich venom protein kaouthin-1 of Naja kaouthia (Monocled cobra).